The chain runs to 2123 residues: Bromodomain adjacent to zinc finger domain protein 2B (2123 aa).

7 disordered regions span residues 1–129 (MESG…VNGT), 144–306 (TPAS…LSQQ), 357–402 (PSPD…EMGK), 473–534 (NENV…HPHP), 546–691 (RGTD…RRVA), 756–793 (RAMDGRRGRPPNPDRPRAREESRMKRRKGRPPNVGSAE), and 937–960 (ARKKAEEKERLKQEKRDEKRLNKE). Over residues 7-46 (LPSSPASSTTPTSSSAPSVASAVSKSSLSTGAASLSSTAS) the composition is skewed to low complexity. Positions 83–95 (FFPPLLGIPPLFA) are enriched in pro residues. Residues 100 to 116 (NHDSSFHSRTSGKSSRN) show a composition bias toward polar residues. Low complexity-rich tracts occupy residues 147-157 (SSSMGQNQSTS) and 193-216 (ESSSNSDSDSGTSSDTSSEGISSS). Positions 217-243 (DSDDLEEEEEEDQSVEESEDDDSDSET) are enriched in acidic residues. Basic and acidic residues predominate over residues 259-277 (SDPKTDGQKATEKAQERRT). Low complexity-rich tracts occupy residues 291-306 (PPFQSQQKQPQVLSQQ) and 366-379 (NKNTSEESSSLTSE). Over residues 473–502 (NENVSSSTPFSSPVNLSTSGRRAPGSQTPA) the composition is skewed to polar residues. Basic and acidic residues predominate over residues 546 to 559 (RGTDSDVPSSKDSE). Residues 560 to 587 (DSNEDEEEDDEEEDEEDDEDDESDDSQS) show a composition bias toward acidic residues. The segment covering 588 to 597 (ESDSNSQSDS) has biased composition (low complexity). Acidic residues predominate over residues 598–615 (EGSEDDEEKDQEESDSDT). Low complexity-rich tracts occupy residues 628–637 (SSSAKSPPSS) and 671–683 (TSSSTLTSTPHSG). The 76-residue stretch at 690 to 765 (VADDQELRIP…RAMDGRRGRP (76 aa)) folds into the MBD domain. A compositionally biased stretch (basic and acidic residues) spans 756-778 (RAMDGRRGRPPNPDRPRAREESR). In terms of domain architecture, DDT spans 1004 to 1069 (GTTFSDCLMV…LSAAVCDPGL (66 aa)). Disordered regions lie at residues 1183–1260 (RDAS…QTAS), 1396–1444 (PPES…KTDA), 1499–1526 (TLVTPQSQPPSKSPSPAPAALLGPSSVQ), and 1588–1614 (FLTSSVASSKSDSPVPPAERPSSAQPV). The span at 1214–1238 (SDYDDDDDDDSDDQADEDEEDEEDK) shows a compositional bias: acidic residues. Over residues 1239–1248 (DDKKGKKTDI) the composition is skewed to basic and acidic residues. The stretch at 1254–1281 (EGDQTASVEELEKQIEKLSKQQSQYRRK) forms a coiled coil. Composition is skewed to polar residues over residues 1408-1422 (NVSTNGGPLSHQNSG) and 1430-1444 (PSATTAQSPVGKTDA). Residues 1505-1515 (SQPPSKSPSPA) show a composition bias toward pro residues. Residues 1588–1600 (FLTSSVASSKSDS) show a composition bias toward low complexity. The segment at 1886–1936 (KVYCQICRKGDNEELLLLCDGCDKGCHTYCHRPKITTIPDGDWFCPACISK) adopts a PHD-type zinc-finger fold. The disordered stretch occupies residues 1949–2013 (VKGKKTNDSK…AESTTSIKKP (65 aa)). A compositionally biased stretch (basic and acidic residues) spans 1984–1995 (GSKELKKRKMEE). Residues 1996-2010 (TTSLNLSKAESTTSI) are compositionally biased toward polar residues. Residues 2015–2119 (KDESRDLALC…KYFEKKWTDT (105 aa)) form the Bromo domain.

It belongs to the WAL family. Component of the BRF-1 ISWI chromatin remodeling complex, at least composed of SMARCA1 and BAZ2B, which regulates the spacing of histone octamers on the DNA template to facilitate access to DNA. Within the BRF-1 ISWI chromatin remodeling complex interacts with SMARCA1; the interaction is direct. Component of the BRF-5 ISWI chromatin remodeling complex, at least composed of SMARCA5/SNF2H and BAZ2B, which regulates the spacing of histone octamers on the DNA template to facilitate access to DNA. Within the BRF-5 ISWI chromatin remodeling complex interacts with SMARCA5/SNF2H; the interaction is direct. Interacts with acetylated lysine residues on histone H1.4, H2A, H2B, H3 and H4 (in vitro). Interacts with EHMT1.

The protein resides in the nucleus. Functionally, regulatory subunit of the ATP-dependent BRF-1 and BRF-5 ISWI chromatin remodeling complexes, which form ordered nucleosome arrays on chromatin and facilitate access to DNA during DNA-templated processes such as DNA replication, transcription, and repair. Both complexes regulate the spacing of nucleosomes along the chromatin and have the ability to slide mononucleosomes to the center of a DNA template. The BRF-1 ISWI chromatin remodeling complex has a lower ATP hydrolysis rate than the BRF-5 ISWI chromatin remodeling complex. Chromatin reader protein, involved in positively modulating the rate of age-related behavioral deterioration. Represses the expression of mitochondrial function-related genes, perhaps by occupying their promoter regions, working in concert with histone methyltransferase EHMT1. The sequence is that of Bromodomain adjacent to zinc finger domain protein 2B from Mus musculus (Mouse).